A 179-amino-acid chain; its full sequence is Putative ADP-ribosylation factor-like protein 5C (179 aa).

Gly2 carries the N-myristoyl glycine lipid modification. GTP-binding positions include 23-30 (GLDNEGKT), 66-70 (DIVRP), and 125-128 (NKQD).

This sequence belongs to the small GTPase superfamily. Arf family.

Its function is as follows. Binds and exchanges GTP and GDP. This Homo sapiens (Human) protein is Putative ADP-ribosylation factor-like protein 5C (ARL5C).